Here is a 307-residue protein sequence, read N- to C-terminus: Aspartate carbamoyltransferase catalytic subunit (307 aa).

The carbamoyl phosphate site is built by Arg-56 and Thr-57. Position 84 (Lys-84) interacts with L-aspartate. The carbamoyl phosphate site is built by Arg-106, His-136, and Gln-139. The L-aspartate site is built by Arg-169 and Arg-221. Positions 262 and 263 each coordinate carbamoyl phosphate.

The protein belongs to the aspartate/ornithine carbamoyltransferase superfamily. ATCase family. In terms of assembly, heterododecamer (2C3:3R2) of six catalytic PyrB chains organized as two trimers (C3), and six regulatory PyrI chains organized as three dimers (R2).

The catalysed reaction is carbamoyl phosphate + L-aspartate = N-carbamoyl-L-aspartate + phosphate + H(+). It functions in the pathway pyrimidine metabolism; UMP biosynthesis via de novo pathway; (S)-dihydroorotate from bicarbonate: step 2/3. Catalyzes the condensation of carbamoyl phosphate and aspartate to form carbamoyl aspartate and inorganic phosphate, the committed step in the de novo pyrimidine nucleotide biosynthesis pathway. The polypeptide is Aspartate carbamoyltransferase catalytic subunit (Streptococcus pneumoniae (strain P1031)).